We begin with the raw amino-acid sequence, 399 residues long: Bifunctional enzyme IspD/IspF (399 aa).

The interval 1-239 (MHTWALLLAA…SSEKKNMQVP (239 aa)) is 2-C-methyl-D-erythritol 4-phosphate cytidylyltransferase. The 2-C-methyl-D-erythritol 2,4-cyclodiphosphate synthase stretch occupies residues 240–399 (CVGWGYDVHR…AVTALRRVSS (160 aa)). A divalent metal cation contacts are provided by Asp246 and His248. 4-CDP-2-C-methyl-D-erythritol 2-phosphate contacts are provided by residues 246–248 (DVH) and 273–274 (HS). Residue His281 participates in a divalent metal cation binding. 4-CDP-2-C-methyl-D-erythritol 2-phosphate is bound by residues 295–297 (DIG), 300–304 (FPDTD), 371–374 (TTEE), and Phe378.

This sequence in the N-terminal section; belongs to the IspD/TarI cytidylyltransferase family. IspD subfamily. It in the C-terminal section; belongs to the IspF family. It depends on a divalent metal cation as a cofactor.

The enzyme catalyses 2-C-methyl-D-erythritol 4-phosphate + CTP + H(+) = 4-CDP-2-C-methyl-D-erythritol + diphosphate. The catalysed reaction is 4-CDP-2-C-methyl-D-erythritol 2-phosphate = 2-C-methyl-D-erythritol 2,4-cyclic diphosphate + CMP. It participates in isoprenoid biosynthesis; isopentenyl diphosphate biosynthesis via DXP pathway; isopentenyl diphosphate from 1-deoxy-D-xylulose 5-phosphate: step 2/6. It functions in the pathway isoprenoid biosynthesis; isopentenyl diphosphate biosynthesis via DXP pathway; isopentenyl diphosphate from 1-deoxy-D-xylulose 5-phosphate: step 4/6. Functionally, bifunctional enzyme that catalyzes the formation of 4-diphosphocytidyl-2-C-methyl-D-erythritol from CTP and 2-C-methyl-D-erythritol 4-phosphate (MEP) (IspD), and catalyzes the conversion of 4-diphosphocytidyl-2-C-methyl-D-erythritol 2-phosphate (CDP-ME2P) to 2-C-methyl-D-erythritol 2,4-cyclodiphosphate (ME-CPP) with a corresponding release of cytidine 5-monophosphate (CMP) (IspF). This Oleidesulfovibrio alaskensis (strain ATCC BAA-1058 / DSM 17464 / G20) (Desulfovibrio alaskensis) protein is Bifunctional enzyme IspD/IspF.